A 164-amino-acid chain; its full sequence is NADH-quinone oxidoreductase subunit B (164 aa).

Residues C38, C39, C104, and C133 each contribute to the [4Fe-4S] cluster site.

Belongs to the complex I 20 kDa subunit family. NDH-1 is composed of 14 different subunits. Subunits NuoB, C, D, E, F, and G constitute the peripheral sector of the complex. Requires [4Fe-4S] cluster as cofactor.

Its subcellular location is the cell inner membrane. It carries out the reaction a quinone + NADH + 5 H(+)(in) = a quinol + NAD(+) + 4 H(+)(out). In terms of biological role, NDH-1 shuttles electrons from NADH, via FMN and iron-sulfur (Fe-S) centers, to quinones in the respiratory chain. The immediate electron acceptor for the enzyme in this species is believed to be ubiquinone. Couples the redox reaction to proton translocation (for every two electrons transferred, four hydrogen ions are translocated across the cytoplasmic membrane), and thus conserves the redox energy in a proton gradient. In Protochlamydia amoebophila (strain UWE25), this protein is NADH-quinone oxidoreductase subunit B.